The sequence spans 641 residues: Threonine--tRNA ligase (641 aa).

The region spanning 1–61 (MPVITLPDGS…ENDTELAIVT (61 aa)) is the TGS domain. Residues 242-533 (DHRKIGKKLG…LIEEYEGAFP (292 aa)) form a catalytic region. The Zn(2+) site is built by C333, H384, and H510.

The protein belongs to the class-II aminoacyl-tRNA synthetase family. As to quaternary structure, homodimer. Zn(2+) serves as cofactor.

The protein localises to the cytoplasm. The catalysed reaction is tRNA(Thr) + L-threonine + ATP = L-threonyl-tRNA(Thr) + AMP + diphosphate + H(+). In terms of biological role, catalyzes the attachment of threonine to tRNA(Thr) in a two-step reaction: L-threonine is first activated by ATP to form Thr-AMP and then transferred to the acceptor end of tRNA(Thr). Also edits incorrectly charged L-seryl-tRNA(Thr). In Marinobacter nauticus (strain ATCC 700491 / DSM 11845 / VT8) (Marinobacter aquaeolei), this protein is Threonine--tRNA ligase.